A 188-amino-acid polypeptide reads, in one-letter code: Small ribosomal subunit protein bS16 (188 aa).

The segment at 155–188 is disordered; that stretch reads IAAASATEEAATEEVAEAAEEAPAAEENNETTEA. The segment covering 164–188 has biased composition (acidic residues); the sequence is AATEEVAEAAEEAPAAEENNETTEA.

Belongs to the bacterial ribosomal protein bS16 family.

This is Small ribosomal subunit protein bS16 from Flavobacterium johnsoniae (strain ATCC 17061 / DSM 2064 / JCM 8514 / BCRC 14874 / CCUG 350202 / NBRC 14942 / NCIMB 11054 / UW101) (Cytophaga johnsonae).